The primary structure comprises 288 residues: Eukaryotic translation initiation factor 3 subunit F-2 (288 aa).

The region spanning 12-149 (VLLHPLVLFQ…TRIFCAVATG (138 aa)) is the MPN domain.

Belongs to the eIF-3 subunit F family. In terms of assembly, component of the eukaryotic translation initiation factor 3 (eIF-3) complex. The eIF-3 complex interacts with pix.

It is found in the cytoplasm. Its function is as follows. Component of the eukaryotic translation initiation factor 3 (eIF-3) complex, which is involved in protein synthesis of a specialized repertoire of mRNAs and, together with other initiation factors, stimulates binding of mRNA and methionyl-tRNAi to the 40S ribosome. The eIF-3 complex specifically targets and initiates translation of a subset of mRNAs involved in cell proliferation. The polypeptide is Eukaryotic translation initiation factor 3 subunit F-2 (Drosophila pseudoobscura pseudoobscura (Fruit fly)).